We begin with the raw amino-acid sequence, 877 residues long: Valine--tRNA ligase (877 aa).

Residues 46–56 (PYPTGSIHMGH) carry the 'HIGH' region motif. The 'KMSKS' region signature appears at 529-533 (KMSKS). Residue Lys-532 coordinates ATP.

This sequence belongs to the class-I aminoacyl-tRNA synthetase family. ValS type 2 subfamily.

It is found in the cytoplasm. The catalysed reaction is tRNA(Val) + L-valine + ATP = L-valyl-tRNA(Val) + AMP + diphosphate. Its function is as follows. Catalyzes the attachment of valine to tRNA(Val). As ValRS can inadvertently accommodate and process structurally similar amino acids such as threonine, to avoid such errors, it has a 'posttransfer' editing activity that hydrolyzes mischarged Thr-tRNA(Val) in a tRNA-dependent manner. The polypeptide is Valine--tRNA ligase (Methanothermobacter thermautotrophicus (strain ATCC 29096 / DSM 1053 / JCM 10044 / NBRC 100330 / Delta H) (Methanobacterium thermoautotrophicum)).